The chain runs to 281 residues: RAD52 motif-containing protein 1 (281 aa).

Positions 1-92 are necessary for nuclear localization and for nucleolar accumulation in response to heat shock; sequence MAELISFVVP…KPLFQTSPVK (92 aa). Residues 15 to 98 form the RRM domain; it reads KVLLVWDLST…SPVKVRLGTR (84 aa). Residues 90-133 are necessary for nuclear and nucleolar localization; it reads PVKVRLGTRHKALQHQAFALNSSRCQELANYYFGFSGWSKRIIK.

In terms of assembly, homodimer.

The protein localises to the nucleus. The protein resides in the cytoplasm. It localises to the nucleolus. It is found in the cajal body. Its subcellular location is the PML body. In terms of biological role, may confer resistance to the antitumor agent cisplatin. Binds to DNA and RNA. This Mus musculus (Mouse) protein is RAD52 motif-containing protein 1 (Rdm1).